A 1260-amino-acid chain; its full sequence is Paraclostridial mosquitocidal protein 1 (1260 aa).

Histidine 208 lines the Zn(2+) pocket. Glutamate 209 functions as the Proton acceptor in the catalytic mechanism. Zn(2+) contacts are provided by histidine 212 and glutamate 248. A disulfide bond links cysteine 395 and cysteine 406. The interval 401–824 (NRVNICIDVN…NIQSIPDFDI (424 aa)) is translocation domain (TD). The segment at 825-1065 (NALIDRLGIQ…SYFNSNILRD (241 aa)) is HCN. The segment at 1066–1260 (FWGEPLEYNK…FVSEDEGWKE (195 aa)) is HCC.

This sequence belongs to the peptidase M27 family. Zn(2+) is required as a cofactor.

It carries out the reaction Limited hydrolysis of proteins of the neuroexocytosis apparatus, synaptobrevins, SNAP25 or syntaxin. No detected action on small molecule substrates.. Preincubation with the metalloprotease inhibitor 1,10-phenanthroline before injection into Anopheles or Aedes decreases toxicity. Functionally, neurotoxin active against Anopheles but not Aedes mosquitoes upon oral ingestion; expression of the ptox operon (ntnh-orfX1-orfX2-orfX3-pmp1) in B.thuringiensis kills Anopheles but not Aedes mosquito 3rd instar larvae. The ntnh-pmp1 construct is about half as toxic. PMP1 is toxic when injected directly into Anopheles or Aedes mosquito 3rd instar larvae, larvae no longer move, suggesting they are paralyzed. Adult mosquitoes (Anopheles or Aedes) and Drosophila lose the ability to fly in a dose-dependent manner by 24 hours after injection with 100 pg neurotoxin. Not toxic upon injection in mice. In terms of biological role, neurotoxin that cleaves A.gambiae syntaxin 1a, probably hydrolyzing the '240-Glu-|-His-241' bond. Does not cleave A.gambiae n-synaptobrevin or SNAP-25, nor human syntaxin 1A. Its function is as follows. Responsible for host epithelial cell transcytosis, host nerve cell targeting and translocation of PMP1 light chain (LC) into host cytosol. Composed of 3 subdomains; the translocation domain (TD), and N-terminus and C-terminus of the receptor-binding domain (RBD), called HCN and HCC. This is Paraclostridial mosquitocidal protein 1 from Paraclostridium bifermentans (Clostridium bifermentans).